The sequence spans 300 residues: MGKTQILWGIAPIGWRNDDIPEIGAGNTLQHLLSDIVVAGFQGTEVGGFFPEPAILNKELELRNLRIAGKWFSSYIIRDGIEEAAKEFAAHCQYLKDVHADVAVVSEQTYSVQGLDKNVFKEKPYFTDEEWQRLFEGLNHLGEIAGRYGLKLVYHHHLGTGVQTEEEVDRLMAGTDPALVHLLYDTGHAYISDGNYMNILEKHIDRIRHVHFKDARLKIMEKCKREGNSFQQAFLQGMFTVPGDGCIDFREVYQTLLKHGYSGWIVVEAEQDPDVANPLEYALIARKYIDRHLLNVPATN.

Belongs to the IolE/MocC family. Requires glutathione as cofactor. Co(2+) serves as cofactor. It depends on Mn(2+) as a cofactor.

It carries out the reaction scyllo-inosose = 3D-3,5/4-trihydroxycyclohexane-1,2-dione + H2O. It participates in polyol metabolism; myo-inositol degradation into acetyl-CoA; acetyl-CoA from myo-inositol: step 2/7. Its function is as follows. Catalyzes the dehydration of inosose (2-keto-myo-inositol, 2KMI or 2,4,6/3,5-pentahydroxycyclohexanone) to 3D-(3,5/4)-trihydroxycyclohexane-1,2-dione (D-2,3-diketo-4-deoxy-epi-inositol). The chain is Inosose dehydratase from Bacillus licheniformis (strain ATCC 14580 / DSM 13 / JCM 2505 / CCUG 7422 / NBRC 12200 / NCIMB 9375 / NCTC 10341 / NRRL NRS-1264 / Gibson 46).